A 197-amino-acid chain; its full sequence is Adenylyl-sulfate kinase (197 aa).

33 to 40 contributes to the ATP binding site; the sequence is GLSGSGKS. S107 functions as the Phosphoserine intermediate in the catalytic mechanism.

It belongs to the APS kinase family.

The enzyme catalyses adenosine 5'-phosphosulfate + ATP = 3'-phosphoadenylyl sulfate + ADP + H(+). The protein operates within sulfur metabolism; hydrogen sulfide biosynthesis; sulfite from sulfate: step 2/3. In terms of biological role, catalyzes the synthesis of activated sulfate. The chain is Adenylyl-sulfate kinase from Bacillus velezensis (strain DSM 23117 / BGSC 10A6 / LMG 26770 / FZB42) (Bacillus amyloliquefaciens subsp. plantarum).